Here is a 147-residue protein sequence, read N- to C-terminus: Hemoglobin subunit epsilon (147 aa).

Positions 3 to 147 (HWSAEEKQLI…VAHALARKYH (145 aa)) constitute a Globin domain. Residues His-64 and His-93 each contribute to the heme b site.

This sequence belongs to the globin family. In terms of assembly, heterotetramer of two epsilon chains and two alpha chains. Hemoglobin E (Hbe) contains a alpha-A chains while hemoglobin M (Hbm) contains alpha-D chains.

Its function is as follows. Beta-type chain found in early embryos. This chain is Hemoglobin subunit epsilon (HBE), found in Gallus gallus (Chicken).